The primary structure comprises 52 residues: Ornatin-B (52 aa).

A Cell attachment site motif is present at residues 42–44; sequence RGD.

The protein belongs to the ornatin family.

Its subcellular location is the secreted. Functionally, potent inhibitor of fibrinogen interaction with platelet receptors expressed on glycoprotein IIb-IIIa complex. May prevent blood from clotting during either feeding and/or storage of ingested blood. The polypeptide is Ornatin-B (Placobdella ornata (Turtle leech)).